The primary structure comprises 246 residues: Ubiquinone biosynthesis O-methyltransferase (246 aa).

S-adenosyl-L-methionine contacts are provided by Arg36, Gly60, Asp81, and Leu123.

Belongs to the methyltransferase superfamily. UbiG/COQ3 family.

The catalysed reaction is a 3-demethylubiquinol + S-adenosyl-L-methionine = a ubiquinol + S-adenosyl-L-homocysteine + H(+). It catalyses the reaction a 3-(all-trans-polyprenyl)benzene-1,2-diol + S-adenosyl-L-methionine = a 2-methoxy-6-(all-trans-polyprenyl)phenol + S-adenosyl-L-homocysteine + H(+). The protein operates within cofactor biosynthesis; ubiquinone biosynthesis. Functionally, O-methyltransferase that catalyzes the 2 O-methylation steps in the ubiquinone biosynthetic pathway. This Rickettsia typhi (strain ATCC VR-144 / Wilmington) protein is Ubiquinone biosynthesis O-methyltransferase.